Consider the following 336-residue polypeptide: UPF0324 membrane protein BT_1919 (336 aa).

8 helical membrane-spanning segments follow: residues 2-19 (LHGV…FYIG), 23-45 (FVRS…YANS), 85-107 (IGLP…GIYL), 117-134 (IALL…AAIL), 147-169 (TAVS…PFLY), 210-232 (AIIV…TYLV), 253-275 (WFAI…AQLV), and 310-332 (FVLA…KYLT).

This sequence belongs to the UPF0324 family.

Its subcellular location is the cell membrane. The sequence is that of UPF0324 membrane protein BT_1919 from Bacteroides thetaiotaomicron (strain ATCC 29148 / DSM 2079 / JCM 5827 / CCUG 10774 / NCTC 10582 / VPI-5482 / E50).